Consider the following 340-residue polypeptide: Heat-inducible transcription repressor HrcA (340 aa).

It belongs to the HrcA family.

Functionally, negative regulator of class I heat shock genes (grpE-dnaK-dnaJ and groELS operons). Prevents heat-shock induction of these operons. The sequence is that of Heat-inducible transcription repressor HrcA from Mycoplasma capricolum subsp. capricolum (strain California kid / ATCC 27343 / NCTC 10154).